The primary structure comprises 78 residues: Large ribosomal subunit protein bL28 (78 aa).

The protein belongs to the bacterial ribosomal protein bL28 family.

This chain is Large ribosomal subunit protein bL28, found in Alcanivorax borkumensis (strain ATCC 700651 / DSM 11573 / NCIMB 13689 / SK2).